Here is a 110-residue protein sequence, read N- to C-terminus: Vacuolar ATPase assembly integral membrane protein VMA21 (110 aa).

The tract at residues 1–28 (MTTRRIIGQDGEEKTYLDVDPRGPPGPS) is disordered. Residues 1 to 44 (MTTRRIIGQDGEEKTYLDVDPRGPPGPSNISPAVPASVIWKLMS) are Cytoplasmic-facing. The span at 11–21 (GEEKTYLDVDP) shows a compositional bias: basic and acidic residues. The chain crosses the membrane as a helical span at residues 45–65 (FTFAMITLPIGTYFFTVNYVF). Residues 66-71 (GGNATY) lie on the Lumenal side of the membrane. A helical membrane pass occupies residues 72–92 (AGALAAIMANVVLIAYVIMAF). The Cytoplasmic portion of the chain corresponds to 93–110 (KDDQAEQAEDAREAKKEL). Residues 107 to 110 (KKEL) carry the Prevents secretion from ER motif.

The protein belongs to the VMA21 family.

The protein resides in the endoplasmic reticulum membrane. The protein localises to the endoplasmic reticulum-Golgi intermediate compartment membrane. Its subcellular location is the cytoplasmic vesicle. It is found in the COPII-coated vesicle membrane. In terms of biological role, required for the assembly of the V0 complex of the vacuolar ATPase (V-ATPase) in the endoplasmic reticulum. In Phaeosphaeria nodorum (strain SN15 / ATCC MYA-4574 / FGSC 10173) (Glume blotch fungus), this protein is Vacuolar ATPase assembly integral membrane protein VMA21.